Reading from the N-terminus, the 316-residue chain is Probable porphobilinogen deaminase (316 aa).

Position 234 is an S-(dipyrrolylmethanemethyl)cysteine (Cys234).

This sequence belongs to the HMBS family. Dipyrromethane serves as cofactor.

The enzyme catalyses 4 porphobilinogen + H2O = hydroxymethylbilane + 4 NH4(+). It participates in porphyrin-containing compound metabolism; protoporphyrin-IX biosynthesis; coproporphyrinogen-III from 5-aminolevulinate: step 2/4. Its function is as follows. Tetrapolymerization of the monopyrrole PBG into the hydroxymethylbilane pre-uroporphyrinogen in several discrete steps. This is Probable porphobilinogen deaminase from Methanosarcina barkeri (strain Fusaro / DSM 804).